Here is a 157-residue protein sequence, read N- to C-terminus: Transcriptional repressor NrdR (157 aa).

The segment at 3 to 34 (CPKCNSTHSRVVDSRHADEANAIRRRRECENC) is a zinc-finger region. In terms of domain architecture, ATP-cone spans 49–139 (LIVVKKDGTR…VYKEFKDVDQ (91 aa)).

The protein belongs to the NrdR family. The cofactor is Zn(2+).

Its function is as follows. Negatively regulates transcription of bacterial ribonucleotide reductase nrd genes and operons by binding to NrdR-boxes. This is Transcriptional repressor NrdR from Staphylococcus carnosus (strain TM300).